Reading from the N-terminus, the 252-residue chain is Acetoacetate decarboxylase (252 aa).

Catalysis depends on Lys-116, which acts as the Schiff-base intermediate with acetoacetate.

Belongs to the ADC family.

The enzyme catalyses acetoacetate + H(+) = acetone + CO2. In terms of biological role, catalyzes the conversion of acetoacetate to acetone and carbon dioxide. In Paraburkholderia phytofirmans (strain DSM 17436 / LMG 22146 / PsJN) (Burkholderia phytofirmans), this protein is Acetoacetate decarboxylase.